The following is a 146-amino-acid chain: D-aminoacyl-tRNA deacylase (146 aa).

A Gly-cisPro motif, important for rejection of L-amino acids motif is present at residues 137–138 (GP).

Belongs to the DTD family. As to quaternary structure, homodimer.

It is found in the cytoplasm. It catalyses the reaction glycyl-tRNA(Ala) + H2O = tRNA(Ala) + glycine + H(+). The enzyme catalyses a D-aminoacyl-tRNA + H2O = a tRNA + a D-alpha-amino acid + H(+). Its function is as follows. An aminoacyl-tRNA editing enzyme that deacylates mischarged D-aminoacyl-tRNAs. Also deacylates mischarged glycyl-tRNA(Ala), protecting cells against glycine mischarging by AlaRS. Acts via tRNA-based rather than protein-based catalysis; rejects L-amino acids rather than detecting D-amino acids in the active site. By recycling D-aminoacyl-tRNA to D-amino acids and free tRNA molecules, this enzyme counteracts the toxicity associated with the formation of D-aminoacyl-tRNA entities in vivo and helps enforce protein L-homochirality. The polypeptide is D-aminoacyl-tRNA deacylase (Acinetobacter baylyi (strain ATCC 33305 / BD413 / ADP1)).